Reading from the N-terminus, the 1497-residue chain is DNA-directed RNA polymerase subunit beta' (1497 aa).

Zn(2+) contacts are provided by C67, C69, C82, and C85. The Mg(2+) site is built by D499, D501, and D503. Zn(2+)-binding residues include C867, C943, C950, and C953. A disordered region spans residues 1476–1497 (ESNATERVVEEPATREGFANER). Residues 1482–1497 (RVVEEPATREGFANER) are compositionally biased toward basic and acidic residues.

The protein belongs to the RNA polymerase beta' chain family. The RNAP catalytic core consists of 2 alpha, 1 beta, 1 beta' and 1 omega subunit. When a sigma factor is associated with the core the holoenzyme is formed, which can initiate transcription. Mg(2+) serves as cofactor. Requires Zn(2+) as cofactor.

It carries out the reaction RNA(n) + a ribonucleoside 5'-triphosphate = RNA(n+1) + diphosphate. DNA-dependent RNA polymerase catalyzes the transcription of DNA into RNA using the four ribonucleoside triphosphates as substrates. This is DNA-directed RNA polymerase subunit beta' from Pelodictyon phaeoclathratiforme (strain DSM 5477 / BU-1).